We begin with the raw amino-acid sequence, 118 residues long: UPF0251 protein TTE1845 (118 aa).

It belongs to the UPF0251 family.

The sequence is that of UPF0251 protein TTE1845 from Caldanaerobacter subterraneus subsp. tengcongensis (strain DSM 15242 / JCM 11007 / NBRC 100824 / MB4) (Thermoanaerobacter tengcongensis).